The following is a 123-amino-acid chain: MVRLLGIDLPRNKRIAYALTYIHGIGLTSAQKFIELAEISADTRTDDITTEQAVVLRNLLENCELNLEGDLRRFNGLNIKRLNEINCHRGKRHRNSLPVRGQRTRTNARSRRGAKKTVTGKKK.

Positions 90 to 123 (GKRHRNSLPVRGQRTRTNARSRRGAKKTVTGKKK) are disordered. A compositionally biased stretch (basic residues) spans 102-123 (QRTRTNARSRRGAKKTVTGKKK).

This sequence belongs to the universal ribosomal protein uS13 family. Part of the 30S ribosomal subunit.

Its subcellular location is the plastid. The protein localises to the chloroplast. In terms of biological role, located at the top of the head of the 30S subunit, it contacts several helices of the 16S rRNA. The chain is Small ribosomal subunit protein uS13c from Thalassiosira pseudonana (Marine diatom).